A 106-amino-acid polypeptide reads, in one-letter code: MSTAIAQQKIRIRLKAFDRRMLDLSCDKIIETADQTAATAIGPIPLPTKRKIYCVLRSPHVDKDSREHFETRTHRRIIDIYSPSAKTIDALMKLDLPSGVDIEVKL.

This sequence belongs to the universal ribosomal protein uS10 family. As to quaternary structure, part of the 30S ribosomal subunit.

Functionally, involved in the binding of tRNA to the ribosomes. The sequence is that of Small ribosomal subunit protein uS10 from Parasynechococcus marenigrum (strain WH8102).